Here is a 273-residue protein sequence, read N- to C-terminus: 4-hydroxy-tetrahydrodipicolinate reductase (273 aa).

Residues 12 to 17 and glutamate 38 each bind NAD(+); that span reads GAGGRM. Arginine 39 is a binding site for NADP(+). Residues 102 to 104 and 126 to 129 contribute to the NAD(+) site; these read GTT and AANF. Histidine 159 (proton donor/acceptor) is an active-site residue. Residue histidine 160 participates in (S)-2,3,4,5-tetrahydrodipicolinate binding. The active-site Proton donor is lysine 163. Position 169-170 (169-170) interacts with (S)-2,3,4,5-tetrahydrodipicolinate; the sequence is GT.

It belongs to the DapB family. As to quaternary structure, homotetramer.

The protein resides in the cytoplasm. It carries out the reaction (S)-2,3,4,5-tetrahydrodipicolinate + NAD(+) + H2O = (2S,4S)-4-hydroxy-2,3,4,5-tetrahydrodipicolinate + NADH + H(+). The catalysed reaction is (S)-2,3,4,5-tetrahydrodipicolinate + NADP(+) + H2O = (2S,4S)-4-hydroxy-2,3,4,5-tetrahydrodipicolinate + NADPH + H(+). It participates in amino-acid biosynthesis; L-lysine biosynthesis via DAP pathway; (S)-tetrahydrodipicolinate from L-aspartate: step 4/4. In terms of biological role, catalyzes the conversion of 4-hydroxy-tetrahydrodipicolinate (HTPA) to tetrahydrodipicolinate. The protein is 4-hydroxy-tetrahydrodipicolinate reductase of Salmonella paratyphi A (strain ATCC 9150 / SARB42).